We begin with the raw amino-acid sequence, 79 residues long: Omega-phylotoxin-To1a (79 aa).

The N-terminal stretch at 1–21 (MKKTFCFILILVCIVLKSVNA) is a signal peptide. The propeptide occupies 22–38 (EEEDNFEESSLEMETAR). Intrachain disulfides connect C39–C59, C46–C63, C58–C78, and C65–C76.

As to expression, expressed by the venom duct.

It is found in the secreted. Functionally, insect-specific toxin that probably acts as an inhibitor of presynaptic insect calcium channels, presumably Cav2 subtype. In vivo, induces immediate paralysis on insects, followed by death when high doses are injected. The protein is Omega-phylotoxin-To1a of Tibellus oblongus (Oblong running crab spider).